Reading from the N-terminus, the 926-residue chain is Ubiquitin carboxyl-terminal hydrolase 4 (926 aa).

Positions Ser205–Val328 constitute a Rhodanese domain. At Ser443 the chain carries Phosphoserine. In terms of domain architecture, USP spans Val562 to Val923. The Nucleophile role is filled by Cys571. The Proton acceptor role is filled by His880.

Belongs to the peptidase C19 family. Interacts with BRO1, RFU1 and VPS32. Associates with the 26S proteasome.

The protein localises to the cytoplasm. The protein resides in the late endosome membrane. It carries out the reaction Thiol-dependent hydrolysis of ester, thioester, amide, peptide and isopeptide bonds formed by the C-terminal Gly of ubiquitin (a 76-residue protein attached to proteins as an intracellular targeting signal).. RFU1 is an inhibitor of deubiquitination activity. Functionally, ubiquitin thioesterase that acts at the late endosome/prevacuolar compartment to recover ubiquitin from ubiquitinated membrane proteins en route to the vacuole. Also removes ubiquitin from soluble proteins targeted to proteasomes. Is essential to maintain a normal level of free ubiquitin. Involved in the ammonium-induced down-regulation of the GAP1 permease and the UME3 destruction in response to oxidative stress. Has a role in the RAD9 checkpoint response to TOP1 poisons. Required for promoting coordination of DNA replication and avoids DNA overreplication. This chain is Ubiquitin carboxyl-terminal hydrolase 4 (DOA4), found in Saccharomyces cerevisiae (strain YJM789) (Baker's yeast).